Reading from the N-terminus, the 74-residue chain is Exodeoxyribonuclease 7 small subunit (74 aa).

Belongs to the XseB family. In terms of assembly, heterooligomer composed of large and small subunits.

It localises to the cytoplasm. The catalysed reaction is Exonucleolytic cleavage in either 5'- to 3'- or 3'- to 5'-direction to yield nucleoside 5'-phosphates.. Its function is as follows. Bidirectionally degrades single-stranded DNA into large acid-insoluble oligonucleotides, which are then degraded further into small acid-soluble oligonucleotides. This is Exodeoxyribonuclease 7 small subunit from Bdellovibrio bacteriovorus (strain ATCC 15356 / DSM 50701 / NCIMB 9529 / HD100).